A 212-amino-acid polypeptide reads, in one-letter code: Probable octanoyltransferase (212 aa).

In terms of domain architecture, BPL/LPL catalytic spans 28 to 199; that stretch reads GVSEEMILVT…NLETLLQRQE (172 aa). Residues 66–73, 130–132, and 143–145 contribute to the substrate site; these read RGGDATYH, SVG, and GVA. The Acyl-thioester intermediate role is filled by Cys161.

Belongs to the LipB family.

It is found in the cytoplasm. The catalysed reaction is octanoyl-[ACP] + L-lysyl-[protein] = N(6)-octanoyl-L-lysyl-[protein] + holo-[ACP] + H(+). Its pathway is protein modification; protein lipoylation via endogenous pathway; protein N(6)-(lipoyl)lysine from octanoyl-[acyl-carrier-protein]: step 1/2. Functionally, catalyzes the transfer of endogenously produced octanoic acid from octanoyl-acyl-carrier-protein onto the lipoyl domains of lipoate-dependent enzymes. Lipoyl-ACP can also act as a substrate although octanoyl-ACP is likely to be the physiological substrate. This Pyrobaculum arsenaticum (strain DSM 13514 / JCM 11321 / PZ6) protein is Probable octanoyltransferase.